Consider the following 153-residue polypeptide: Nitrogen regulatory protein (153 aa).

The PTS EIIA type-2 domain maps to 5–148 (DLVAPEAILP…QAIYSVLALP (144 aa)). H66 acts as the Tele-phosphohistidine intermediate in catalysis.

The protein resides in the cytoplasm. Functionally, seems to have a role in regulating nitrogen assimilation. The protein is Nitrogen regulatory protein (ptsN) of Bradyrhizobium diazoefficiens (strain JCM 10833 / BCRC 13528 / IAM 13628 / NBRC 14792 / USDA 110).